The sequence spans 376 residues: Queuine tRNA-ribosyltransferase (376 aa).

The active-site Proton acceptor is Asp89. Residues 89 to 93 (DSGGF), Asp143, Gln194, and Gly221 contribute to the substrate site. The tract at residues 252–258 (GVGLPSN) is RNA binding. The active-site Nucleophile is Asp271. Residues 276–280 (ARNGR) are RNA binding; important for wobble base 34 recognition. Residues Cys309, Cys311, Cys314, and His340 each coordinate Zn(2+).

The protein belongs to the queuine tRNA-ribosyltransferase family. In terms of assembly, homodimer. Within each dimer, one monomer is responsible for RNA recognition and catalysis, while the other monomer binds to the replacement base PreQ1. The cofactor is Zn(2+).

The catalysed reaction is 7-aminomethyl-7-carbaguanine + guanosine(34) in tRNA = 7-aminomethyl-7-carbaguanosine(34) in tRNA + guanine. It participates in tRNA modification; tRNA-queuosine biosynthesis. In terms of biological role, catalyzes the base-exchange of a guanine (G) residue with the queuine precursor 7-aminomethyl-7-deazaguanine (PreQ1) at position 34 (anticodon wobble position) in tRNAs with GU(N) anticodons (tRNA-Asp, -Asn, -His and -Tyr). Catalysis occurs through a double-displacement mechanism. The nucleophile active site attacks the C1' of nucleotide 34 to detach the guanine base from the RNA, forming a covalent enzyme-RNA intermediate. The proton acceptor active site deprotonates the incoming PreQ1, allowing a nucleophilic attack on the C1' of the ribose to form the product. After dissociation, two additional enzymatic reactions on the tRNA convert PreQ1 to queuine (Q), resulting in the hypermodified nucleoside queuosine (7-(((4,5-cis-dihydroxy-2-cyclopenten-1-yl)amino)methyl)-7-deazaguanosine). The polypeptide is Queuine tRNA-ribosyltransferase (Clostridium tetani (strain Massachusetts / E88)).